The primary structure comprises 369 residues: LIM homeobox transcription factor 1-beta (369 aa).

2 LIM zinc-binding domains span residues 23 to 73 and 82 to 135; these read CEGC…CKQD and CSGC…CKGD. The tract at residues 143–196 is disordered; it reads LSSVSPDESDSVKSEDEDGDMKPAKGQGSQSKGGGDDGKDPRRPKRPRTILTTQ. Positions 186–245 form a DNA-binding region, homeobox; the sequence is PKRPRTILTTQQRRAFKASFEVSSKPCRKVRETLAAETGLSVRVVQVWFQNQRAKMKKLA.

Interacts with DHX9.

The protein resides in the nucleus. Functionally, transcription factor involved in the regulation of podocyte-expressed genes. Essential for the specification of dorsal limb fate at both the zeugopodal and autopodal levels. In Mesocricetus auratus (Golden hamster), this protein is LIM homeobox transcription factor 1-beta (LMX1B).